We begin with the raw amino-acid sequence, 477 residues long: PTS system glucose-specific EIICB component (477 aa).

Residues 1–14 lie on the Cytoplasmic side of the membrane; sequence MFKNAFANLQKVGK. Residues 1-388 form the PTS EIIC type-1 domain; sequence MFKNAFANLQ…LDLKTPGRED (388 aa). Residues 15-35 traverse the membrane as a helical segment; the sequence is SLMLPVSVLPIAGILLGVGSA. Residues 36–50 are Periplasmic-facing; it reads NFSWLPAVVSHVMAE. Residues 51–71 form a helical membrane-spanning segment; it reads AGGSVFANMPLIFAIGVALGF. Topologically, residues 72–79 are cytoplasmic; it reads TNNDGVSA. The helical transmembrane segment at 80–100 threads the bilayer; sequence LAAVVAYGIMVKTMAVVAPLV. Residues 101–111 lie on the Periplasmic side of the membrane; the sequence is LHLPAEEIAAK. A helical transmembrane segment spans residues 112 to 132; that stretch reads HLADTGVLGGIISGAIAAYMF. Over 133–151 the chain is Cytoplasmic; that stretch reads NRFYRIKLPEYLGFFAGKR. Residues 152 to 172 form a helical membrane-spanning segment; sequence FVPIISGLAAIFTGVVLSFVW. Over 173 to 190 the chain is Periplasmic; sequence PPIGTAIQAFSQWAAYQN. A helical transmembrane segment spans residues 191–211; that stretch reads PVVAFGIYGFIERCLVPFGLH. The Cytoplasmic portion of the chain corresponds to 212 to 248; the sequence is HIWNVPFQMQIGEYTNAAGQVFHGDIPRYMAGDPTAG. Residues 249-269 traverse the membrane as a helical segment; sequence MLSGGFLFKMYGLPAAAIAIW. Residues 270 to 279 lie on the Periplasmic side of the membrane; sequence HSAKPENRAK. Residues 280 to 300 traverse the membrane as a helical segment; it reads VGGIMISAALTSFLTGITEPI. Topologically, residues 301 to 309 are cytoplasmic; the sequence is EFSFMFVAP. The helical transmembrane segment at 310-330 threads the bilayer; the sequence is ILYIIHAILAGLAFPICILLG. Topologically, residues 331–355 are periplasmic; the sequence is MRDGTSFSHGLIDFIVLSGNSSKLW. The helical transmembrane segment at 356–376 threads the bilayer; that stretch reads LFPIVGAGYAIVYYTVFRVLI. Residues 377–477 are Cytoplasmic-facing; sequence KALDLKTPGR…TEMDEYIRNS (101 aa). A PTS EIIB type-1 domain is found at 399-477; it reads SEMAPALVAA…TEMDEYIRNS (79 aa). Cysteine 421 acts as the Phosphocysteine intermediate; for EIIB activity in catalysis. Position 421 is a phosphocysteine (cysteine 421).

The protein resides in the cell inner membrane. The catalysed reaction is N(pros)-phospho-L-histidyl-[protein] + D-glucose(out) = D-glucose 6-phosphate(in) + L-histidyl-[protein]. In terms of biological role, the phosphoenolpyruvate-dependent sugar phosphotransferase system (sugar PTS), a major carbohydrate active transport system, catalyzes the phosphorylation of incoming sugar substrates concomitantly with their translocation across the cell membrane. The enzyme II complex composed of PtsG and Crr is involved in glucose transport. Also functions as a chemoreceptor monitoring the environment for changes in sugar concentration. It can also phosphorylate mannose, methyl alpha-glucoside and 2-deoxy-glucose. The sequence is that of PTS system glucose-specific EIICB component (ptsG) from Salmonella typhimurium (strain LT2 / SGSC1412 / ATCC 700720).